A 345-amino-acid polypeptide reads, in one-letter code: tRNA N6-adenosine threonylcarbamoyltransferase (345 aa).

Fe cation-binding residues include His-117 and His-121. Residues 140–144 (LVSGG), Asp-173, Gly-186, and Asn-279 contribute to the substrate site. Asp-307 lines the Fe cation pocket.

It belongs to the KAE1 / TsaD family. It depends on Fe(2+) as a cofactor.

The protein localises to the cytoplasm. It carries out the reaction L-threonylcarbamoyladenylate + adenosine(37) in tRNA = N(6)-L-threonylcarbamoyladenosine(37) in tRNA + AMP + H(+). Its function is as follows. Required for the formation of a threonylcarbamoyl group on adenosine at position 37 (t(6)A37) in tRNAs that read codons beginning with adenine. Is involved in the transfer of the threonylcarbamoyl moiety of threonylcarbamoyl-AMP (TC-AMP) to the N6 group of A37, together with TsaE and TsaB. TsaD likely plays a direct catalytic role in this reaction. The polypeptide is tRNA N6-adenosine threonylcarbamoyltransferase (Verminephrobacter eiseniae (strain EF01-2)).